Consider the following 957-residue polypeptide: Glycine dehydrogenase (decarboxylating) (957 aa).

Lysine 708 is subject to N6-(pyridoxal phosphate)lysine.

It belongs to the GcvP family. As to quaternary structure, the glycine cleavage system is composed of four proteins: P, T, L and H. Requires pyridoxal 5'-phosphate as cofactor.

It catalyses the reaction N(6)-[(R)-lipoyl]-L-lysyl-[glycine-cleavage complex H protein] + glycine + H(+) = N(6)-[(R)-S(8)-aminomethyldihydrolipoyl]-L-lysyl-[glycine-cleavage complex H protein] + CO2. The glycine cleavage system catalyzes the degradation of glycine. The P protein binds the alpha-amino group of glycine through its pyridoxal phosphate cofactor; CO(2) is released and the remaining methylamine moiety is then transferred to the lipoamide cofactor of the H protein. The protein is Glycine dehydrogenase (decarboxylating) of Shigella boydii serotype 4 (strain Sb227).